The chain runs to 263 residues: Purine nucleoside phosphorylase SERP0752 (263 aa).

Zn(2+) is bound by residues H79, C124, and H141.

The protein belongs to the purine nucleoside phosphorylase YfiH/LACC1 family. Homodimer. Cu(2+) serves as cofactor. The cofactor is Zn(2+).

It catalyses the reaction adenosine + phosphate = alpha-D-ribose 1-phosphate + adenine. It carries out the reaction S-methyl-5'-thioadenosine + phosphate = 5-(methylsulfanyl)-alpha-D-ribose 1-phosphate + adenine. The enzyme catalyses inosine + phosphate = alpha-D-ribose 1-phosphate + hypoxanthine. The catalysed reaction is adenosine + H2O + H(+) = inosine + NH4(+). In terms of biological role, purine nucleoside enzyme that catalyzes the phosphorolysis of adenosine and inosine nucleosides, yielding D-ribose 1-phosphate and the respective free bases, adenine and hypoxanthine. Also catalyzes the phosphorolysis of S-methyl-5'-thioadenosine into adenine and S-methyl-5-thio-alpha-D-ribose 1-phosphate. Also has adenosine deaminase activity. This is Purine nucleoside phosphorylase SERP0752 from Staphylococcus epidermidis (strain ATCC 35984 / DSM 28319 / BCRC 17069 / CCUG 31568 / BM 3577 / RP62A).